Consider the following 1149-residue polypeptide: Beta-alanine-activating enzyme (1149 aa).

ATP is bound by residues 178-186 (TSGTTGLPK), aspartate 408, arginine 422, and lysine 543. The Carrier domain occupies 570–646 (ASVRLKLQNL…DLLSHIMTET (77 aa)). Position 605 is an O-(pantetheine 4'-phosphoryl)serine (serine 605). Residues 653-683 (PSKKRTADYSDSEASGKRQHKEMTTSSDTES) are disordered.

It belongs to the ATP-dependent AMP-binding enzyme family.

Covalently binds beta-alanine in an ATP-dependent manner to form a thioester bond with its phosphopantetheine group and transfers it to an, as yet, unknown acceptor. May be required for a post-translational protein modification or for post-transcriptional modification of an RNA. The chain is Beta-alanine-activating enzyme (aasdh) from Danio rerio (Zebrafish).